A 95-amino-acid chain; its full sequence is Defensin-1 (95 aa).

Positions 1–19 (MKIYFIVGLLFMAMVAIMA) are cleaved as a signal peptide. A propeptide spanning residues 20-43 (APVEDEFEPLEHFENEERADRHRR) is cleaved from the precursor. Intrachain disulfides connect Cys-46/Cys-74, Cys-60/Cys-79, and Cys-64/Cys-81. Position 94 is a phenylalanine amide (Phe-94).

The protein localises to the secreted. Its function is as follows. Found in royal jelly and in hemolymph, potent antibacterial protein against Gram-positive bacteria at low concentration. This Apis mellifera carnica (Carniolan honeybee) protein is Defensin-1.